The chain runs to 628 residues: Vacuolar-sorting receptor 4 (628 aa).

The signal sequence occupies residues Met1 to Ala24. Residues Arg25–Ala569 lie on the Lumenal side of the membrane. One can recognise a PA domain in the interval Gln56–Ile168. N-linked (GlcNAc...) asparagine glycans are attached at residues Asn148, Asn294, and Asn434. 2 EGF-like domains span residues Glu416 to Glu466 and Gly469 to Glu516. 7 disulfides stabilise this stretch: Cys420-Cys438, Cys427-Cys447, Cys449-Cys465, Cys473-Cys493, Cys480-Cys501, Cys503-Cys515, and Cys545-Cys558. The region spanning Asp517–Ile559 is the EGF-like 3; calcium-binding domain. Residues Trp570 to Val590 form a helical membrane-spanning segment. The Cytoplasmic segment spans residues Tyr591–Ala628. A Tyrosine-based internalization motif motif is present at residues Tyr610–Leu613.

It belongs to the VSR (BP-80) family. Expressed at low levels in seeds, seedlings, roots, stems, leaves, flowers and siliques.

The protein localises to the membrane. It is found in the golgi apparatus membrane. Its subcellular location is the cytoplasmic vesicle. It localises to the clathrin-coated vesicle membrane. The protein resides in the prevacuolar compartment membrane. Functionally, vacuolar-sorting receptor (VSR) involved in clathrin-coated vesicles sorting from Golgi apparatus to vacuoles. The polypeptide is Vacuolar-sorting receptor 4 (VSR4) (Arabidopsis thaliana (Mouse-ear cress)).